The sequence spans 318 residues: DNA-directed RNA polymerase subunit alpha (318 aa).

The interval 1–227 (MTQFEIECLD…NLFSPLKTID (227 aa)) is alpha N-terminal domain (alpha-NTD). The interval 241-318 (HINQILIEEL…KEKTTKIYNK (78 aa)) is alpha C-terminal domain (alpha-CTD).

Belongs to the RNA polymerase alpha chain family. In terms of assembly, in plastids the minimal PEP RNA polymerase catalytic core is composed of four subunits: alpha, beta, beta', and beta''. When a (nuclear-encoded) sigma factor is associated with the core the holoenzyme is formed, which can initiate transcription.

It is found in the plastid. The protein localises to the chloroplast. The enzyme catalyses RNA(n) + a ribonucleoside 5'-triphosphate = RNA(n+1) + diphosphate. DNA-dependent RNA polymerase catalyzes the transcription of DNA into RNA using the four ribonucleoside triphosphates as substrates. This is DNA-directed RNA polymerase subunit alpha from Guillardia theta (Cryptophyte).